The sequence spans 129 residues: MPSYRQARLAEFLRDEIAAIIQRELRDPRLGFVSVTRVEMSPDLRHAKVFVSIYGSHEEQEAALEALQGAAGFIRRLIAPHLHTRHIPELHFKLDRSLEHAEQVARLLRQIQQERQRDESAVESTPESE.

This sequence belongs to the RbfA family. Monomer. Binds 30S ribosomal subunits, but not 50S ribosomal subunits or 70S ribosomes.

It localises to the cytoplasm. In terms of biological role, one of several proteins that assist in the late maturation steps of the functional core of the 30S ribosomal subunit. Associates with free 30S ribosomal subunits (but not with 30S subunits that are part of 70S ribosomes or polysomes). Required for efficient processing of 16S rRNA. May interact with the 5'-terminal helix region of 16S rRNA. The protein is Ribosome-binding factor A of Thermomicrobium roseum (strain ATCC 27502 / DSM 5159 / P-2).